A 549-amino-acid polypeptide reads, in one-letter code: Cation/acetate symporter ActP (549 aa).

13 consecutive transmembrane segments (helical) span residues 33 to 53, 77 to 97, 103 to 123, 148 to 168, 183 to 203, 206 to 226, 262 to 282, 303 to 323, 355 to 375, 404 to 424, 428 to 448, 464 to 484, and 493 to 513; these read WQAI…TYWA, LAIA…ALVF, GLIY…LIAE, ILSA…QMVG, IAVV…GMLA, WVQI…AFMV, ISAL…PHIL, GFMG…IMLV, LFLG…VAGL, VSKI…ILFE, IAFM…PIIL, GGWL…TIWV, and IFPY…GIWF.

Belongs to the sodium:solute symporter (SSF) (TC 2.A.21) family.

The protein localises to the cell inner membrane. Transports acetate. This is Cation/acetate symporter ActP from Salmonella newport (strain SL254).